The sequence spans 110 residues: CHH-like protein (110 aa).

The signal sequence occupies residues 1 to 23; it reads MHLSSVQFAWAALVALAVSAAGA. Positions 24 to 35 are excised as a propeptide; it reads LPSSAPHHVERR. Cystine bridges form between Cys42/Cys78, Cys58/Cys74, and Cys61/Cys87. Position 107 is a valine amide (Val107).

Belongs to the arthropod CHH/MIH/GIH/VIH hormone family.

It localises to the secreted. The polypeptide is CHH-like protein (CHHL) (Bombyx mori (Silk moth)).